The primary structure comprises 155 residues: Small ribosomal subunit protein uS7cz/uS7cy (155 aa).

This sequence belongs to the universal ribosomal protein uS7 family. Part of the 30S ribosomal subunit.

It is found in the plastid. The protein resides in the chloroplast. In terms of biological role, one of the primary rRNA binding proteins, it binds directly to 16S rRNA where it nucleates assembly of the head domain of the 30S subunit. This chain is Small ribosomal subunit protein uS7cz/uS7cy (rps7-A), found in Lemna minor (Common duckweed).